The primary structure comprises 622 residues: Cilia- and flagella-associated protein 206 (622 aa).

This sequence belongs to the CFAP206 family.

The protein localises to the cytoplasm. It is found in the cytoskeleton. It localises to the cilium axoneme. Its subcellular location is the cilium basal body. In terms of biological role, essential for sperm motility and is involved in the regulation of the beating frequency of motile cilia on the epithelial cells of the respiratory tract. Required for the establishment of radial spokes in sperm flagella. The sequence is that of Cilia- and flagella-associated protein 206 from Rattus norvegicus (Rat).